Here is a 426-residue protein sequence, read N- to C-terminus: MTLWVLGLNHQTAPVDLRERAAFAGDALPRALESLRALPQVSEAALLSTCNRTELYAMAEEAHSLVNWLETHAPGLSGYLYQHQEAEAVRHLFRVATGLDSMVLGEPQILGQVKDAWAVARAHGALGSGLDRLFQQTFSVAKRARTDTRVGANPVSVASTAVRLAQDSFARLNESTVLLIGAGETIELAAKHLSEGRVRRLLIANRTLAHAQTLASQHGGFALPLTDLERHLAEADVVFSATAAREPLVTRVQVEQALRARKRKPMLLFDLAVPRDIEASVGELSDAYLYTVDDLERAVEDNRRGRREAADQAEAIIDLQVARYVETLQATAHQAPLKRLRAFGDSTRDELLAKARQQLHNGKPADEVLEQLAHALTNRLLHPPTAALRDAALNNDLELTAAADRLFPEKPGYQHPPHSYPDREDR.

Substrate contacts are provided by residues 49–52 (TCNR), Ser-101, 106–108 (EPQ), and Gln-112. Cys-50 functions as the Nucleophile in the catalytic mechanism. 181 to 186 (GAGETI) serves as a coordination point for NADP(+). The interval 405–426 (RLFPEKPGYQHPPHSYPDREDR) is disordered.

Belongs to the glutamyl-tRNA reductase family. Homodimer.

The catalysed reaction is (S)-4-amino-5-oxopentanoate + tRNA(Glu) + NADP(+) = L-glutamyl-tRNA(Glu) + NADPH + H(+). The protein operates within porphyrin-containing compound metabolism; protoporphyrin-IX biosynthesis; 5-aminolevulinate from L-glutamyl-tRNA(Glu): step 1/2. Functionally, catalyzes the NADPH-dependent reduction of glutamyl-tRNA(Glu) to glutamate 1-semialdehyde (GSA). The protein is Glutamyl-tRNA reductase of Xanthomonas axonopodis pv. citri (strain 306).